We begin with the raw amino-acid sequence, 418 residues long: MIFDKDNFKEFDQELWQAIHDEEIRQQNNIELIASENVVSKAVMAAQGSVLTNKYAEGYPSHRYYGGTDCVDVVESLAIERAKTLFNAEFANVQPHSGSQANAAAYMALIEPGDTVLGMDLAAGGHLTHGASVSFSGKTYHFVSYSVDPKTEMLDYDNILKIAQETQPKLIVAGASAYSRIIDFEKFRQIADAVDAYLMVDMAHIAGLVASGHHPSPIPYAHVTTTTTHKTLRGPRGGLILTNDEAIAKKINSAVFPGLQGGPLEHVIAAKAVALKEALDPSFKIYGEDIIKNAQAMAKVFKEDDDFHLISDGTDNHLFLVDVTKVIENGKKAQNVLEEVNITLNKNSIPFERLSPFKTSGIRIGTPAITSRGMGVEESRRIAELMIKALKNHENQDILTEVRQEIKSLTDAFPLYEN.

(6S)-5,6,7,8-tetrahydrofolate-binding positions include Leu121 and 125-127 (GHL). Lys230 carries the post-translational modification N6-(pyridoxal phosphate)lysine. Position 355–357 (355–357 (SPF)) interacts with (6S)-5,6,7,8-tetrahydrofolate.

The protein belongs to the SHMT family. Homodimer. It depends on pyridoxal 5'-phosphate as a cofactor.

Its subcellular location is the cytoplasm. It carries out the reaction (6R)-5,10-methylene-5,6,7,8-tetrahydrofolate + glycine + H2O = (6S)-5,6,7,8-tetrahydrofolate + L-serine. It functions in the pathway one-carbon metabolism; tetrahydrofolate interconversion. The protein operates within amino-acid biosynthesis; glycine biosynthesis; glycine from L-serine: step 1/1. Functionally, catalyzes the reversible interconversion of serine and glycine with tetrahydrofolate (THF) serving as the one-carbon carrier. This reaction serves as the major source of one-carbon groups required for the biosynthesis of purines, thymidylate, methionine, and other important biomolecules. Also exhibits THF-independent aldolase activity toward beta-hydroxyamino acids, producing glycine and aldehydes, via a retro-aldol mechanism. This Streptococcus agalactiae serotype III (strain NEM316) protein is Serine hydroxymethyltransferase.